A 195-amino-acid polypeptide reads, in one-letter code: MYLINQNGWIEVICGSMFSGKSEELIRRVRRTQFAKQHAIVFKPCIDNRYSEEDVVSHNGLKVKAVPVSASKDIFKHITEEMDVIAIDEVQFFDGDIVEVVQVLANRGYRVIVAGLDQDFRGLPFGQVPQLMAIAEHVTKLQAVCSACGSPASRTQRLIDGEPAAFDDPIILVGASESYEPRCRHCHAVPTNKDK.

ATP-binding positions include G15–S22 and D88–Q91. The Proton acceptor role is filled by E89. Zn(2+)-binding residues include C145, C148, C183, and C186.

Belongs to the thymidine kinase family. Homotetramer.

It is found in the cytoplasm. It catalyses the reaction thymidine + ATP = dTMP + ADP + H(+). This is Thymidine kinase from Bacillus cereus (strain ZK / E33L).